The following is a 375-amino-acid chain: Peptidyl-prolyl cis-trans isomerase D (375 aa).

One can recognise a PPIase cyclophilin-type domain in the interval 7 to 169 (YFDITIANEP…QEVTISSAGV (163 aa)). 3 TPR repeats span residues 217-250 (AGKL…LDVH), 270-307 (LPLL…PNLS), and 312-345 (GKAL…VPGD).

Belongs to the cyclophilin-type PPIase family. PPIase D subfamily.

It is found in the cytoplasm. The catalysed reaction is [protein]-peptidylproline (omega=180) = [protein]-peptidylproline (omega=0). Its function is as follows. PPIases accelerate the folding of proteins. It catalyzes the cis-trans isomerization of proline imidic peptide bonds in oligopeptides. This chain is Peptidyl-prolyl cis-trans isomerase D (CPR6), found in Cryptococcus neoformans var. neoformans serotype D (strain B-3501A) (Filobasidiella neoformans).